A 504-amino-acid chain; its full sequence is Acid phosphatase A (504 aa).

The signal sequence occupies residues 1-22 (MYTLLDILKGLPLLAVAAIASA). Asparagine 84, asparagine 112, asparagine 168, asparagine 260, asparagine 415, asparagine 450, and asparagine 474 each carry an N-linked (GlcNAc...) asparagine glycan.

Belongs to the metallophosphoesterase superfamily. Purple acid phosphatase family. Monomer.

The protein resides in the secreted. It catalyses the reaction a phosphate monoester + H2O = an alcohol + phosphate. In terms of biological role, acid phosphatase involved in the regulation of fungal phenotypic traits and virulence in C.parasitica. The polypeptide is Acid phosphatase A (Cryphonectria parasitica (strain ATCC 38755 / EP155)).